A 329-amino-acid polypeptide reads, in one-letter code: D-lactate dehydrogenase (329 aa).

Residues K154–I155, D174, C205–P206, N211, T232–R234, and D258 contribute to the NAD(+) site. R234 is an active-site residue. E263 is a catalytic residue. H295 acts as the Proton donor in catalysis.

This sequence belongs to the D-isomer specific 2-hydroxyacid dehydrogenase family.

The enzyme catalyses (R)-lactate + NAD(+) = pyruvate + NADH + H(+). In terms of biological role, fermentative lactate dehydrogenase. The sequence is that of D-lactate dehydrogenase (ldhA) from Escherichia coli (strain K12).